Here is a 539-residue protein sequence, read N- to C-terminus: Chaperonin GroEL 2 (539 aa).

Residues 29–32 (TIGP), 86–90 (DGTTT), Gly414, 479–481 (DAL), and Asp495 contribute to the ATP site.

This sequence belongs to the chaperonin (HSP60) family. Forms a cylinder of 14 subunits composed of two heptameric rings stacked back-to-back. Interacts with the co-chaperonin GroES.

Its subcellular location is the cytoplasm. It catalyses the reaction ATP + H2O + a folded polypeptide = ADP + phosphate + an unfolded polypeptide.. Together with its co-chaperonin GroES, plays an essential role in assisting protein folding. The GroEL-GroES system forms a nano-cage that allows encapsulation of the non-native substrate proteins and provides a physical environment optimized to promote and accelerate protein folding. In Synechococcus sp. (strain JA-2-3B'a(2-13)) (Cyanobacteria bacterium Yellowstone B-Prime), this protein is Chaperonin GroEL 2.